Consider the following 456-residue polypeptide: Adenylyltransferase and sulfurtransferase uba4 (456 aa).

Residues G101, D122, 129–133 (SNLHR), K146, and 161–162 (DH) each bind ATP. Zn(2+)-binding residues include C210 and C213. Catalysis depends on C227, which acts as the Glycyl thioester intermediate; for adenylyltransferase activity. Zn(2+) is bound by residues C300 and C303. Residues 350–454 (KEKEHLLIDV…WKEQVDGSWP (105 aa)) enclose the Rhodanese domain. The active-site Cysteine persulfide intermediate; for sulfurtransferase activity is the C409.

The protein in the N-terminal section; belongs to the HesA/MoeB/ThiF family. UBA4 subfamily. It depends on Zn(2+) as a cofactor.

Its subcellular location is the cytoplasm. It localises to the cytosol. It carries out the reaction [molybdopterin-synthase sulfur-carrier protein]-C-terminal Gly-Gly + ATP + H(+) = [molybdopterin-synthase sulfur-carrier protein]-C-terminal Gly-Gly-AMP + diphosphate. The catalysed reaction is [molybdopterin-synthase sulfur-carrier protein]-C-terminal Gly-Gly-AMP + S-sulfanyl-L-cysteinyl-[cysteine desulfurase] + AH2 = [molybdopterin-synthase sulfur-carrier protein]-C-terminal-Gly-aminoethanethioate + L-cysteinyl-[cysteine desulfurase] + A + AMP + 2 H(+). The protein operates within tRNA modification; 5-methoxycarbonylmethyl-2-thiouridine-tRNA biosynthesis. Plays a central role in 2-thiolation of mcm(5)S(2)U at tRNA wobble positions of cytosolic tRNA(Lys), tRNA(Glu) and tRNA(Gln). Also essential during biosynthesis of the molybdenum cofactor. Acts by mediating the C-terminal thiocarboxylation of sulfur carriers urm1 and mocs2a. Its N-terminus first activates urm1 and mocs2a as acyl-adenylates (-COAMP), then the persulfide sulfur on the catalytic cysteine is transferred to urm1 and mocs2a to form thiocarboxylation (-COSH) of their C-terminus. The reaction probably involves hydrogen sulfide that is generated from the persulfide intermediate and that acts as a nucleophile towards urm1 and mocs2a. Subsequently, a transient disulfide bond is formed. Does not use thiosulfate as sulfur donor; nfs1 probably acting as a sulfur donor for thiocarboxylation reactions. This Sclerotinia sclerotiorum (strain ATCC 18683 / 1980 / Ss-1) (White mold) protein is Adenylyltransferase and sulfurtransferase uba4.